The following is a 65-amino-acid chain: Large ribosomal subunit protein bL35 (65 aa).

Over residues 1–11 (MPKIKTRRSAA) the composition is skewed to basic residues. Positions 1–25 (MPKIKTRRSAAKRFSVTGSGKFRRR) are disordered.

This sequence belongs to the bacterial ribosomal protein bL35 family.

The protein is Large ribosomal subunit protein bL35 of Nitratidesulfovibrio vulgaris (strain ATCC 29579 / DSM 644 / CCUG 34227 / NCIMB 8303 / VKM B-1760 / Hildenborough) (Desulfovibrio vulgaris).